The chain runs to 504 residues: Doublesex- and mab-3-related transcription factor A1 (504 aa).

Residues 1 to 13 (MERSQCGSRDRGV) show a composition bias toward basic and acidic residues. The segment at 1–27 (MERSQCGSRDRGVSGRPHLAPGLVVAA) is disordered. A DNA-binding region (DM) is located at residues 97–144 (CARCRNHGVVSALKGHKRFCRWRDCACAKCTLIAERQRVMAAQVALRR). 2 disordered regions span residues 170–192 (GRASGGGGRAENPQSTGGPAAGA) and 266–307 (SISE…NESE). Residues 293–306 (RSLSSSDLESGNES) show a composition bias toward low complexity. Residues 327–362 (RDPLDILTKIFPNYRRSRLEGILRFCKGDVVQAIEQ) form the DMA domain.

The protein belongs to the DMRT family. As to expression, expressed in liver, kidney, pancreas, prostate and weakly detected in testis and ovary.

It is found in the nucleus. The protein is Doublesex- and mab-3-related transcription factor A1 (DMRTA1) of Homo sapiens (Human).